The primary structure comprises 409 residues: Na(+)-translocating NADH-quinone reductase subunit F (409 aa).

The helical transmembrane segment at 5-25 (FIFGIIAFTALVLVLAVIILF) threads the bilayer. A 2Fe-2S ferredoxin-type domain is found at 34 to 128 (GDITISINND…SMDVELPEEI (95 aa)). [2Fe-2S] cluster-binding residues include cysteine 71, cysteine 77, cysteine 80, and cysteine 112. Residues 131–271 (VKKWECTVIS…SGPFGEFFAK (141 aa)) form the FAD-binding FR-type domain.

This sequence belongs to the NqrF family. As to quaternary structure, composed of six subunits; NqrA, NqrB, NqrC, NqrD, NqrE and NqrF. [2Fe-2S] cluster is required as a cofactor. Requires FAD as cofactor.

The protein resides in the cell inner membrane. It catalyses the reaction a ubiquinone + n Na(+)(in) + NADH + H(+) = a ubiquinol + n Na(+)(out) + NAD(+). Its function is as follows. NQR complex catalyzes the reduction of ubiquinone-1 to ubiquinol by two successive reactions, coupled with the transport of Na(+) ions from the cytoplasm to the periplasm. The first step is catalyzed by NqrF, which accepts electrons from NADH and reduces ubiquinone-1 to ubisemiquinone by a one-electron transfer pathway. This Actinobacillus pleuropneumoniae serotype 5b (strain L20) protein is Na(+)-translocating NADH-quinone reductase subunit F.